Here is a 59-residue protein sequence, read N- to C-terminus: Potassium channel toxin alpha-KTx 3.10 (59 aa).

The N-terminal stretch at 1-22 (MKVFFAVLIALFVCSMVIGIHG) is a signal peptide. 3 disulfide bridges follow: C30–C50, C36–C55, and C40–C57.

Belongs to the short scorpion toxin superfamily. Potassium channel inhibitor family. Alpha-KTx 03 subfamily. As to expression, expressed by the venom gland.

The protein localises to the secreted. In terms of biological role, inhibits insect potassium channel. Is at least a 100-fold more potent against the Drosophila Shaker channel than towards its mammalian homologs Kv1.1/KCNA1 and Kv1.3/KCNA3. The sequence is that of Potassium channel toxin alpha-KTx 3.10 from Buthus israelis (Israeli scorpion).